Reading from the N-terminus, the 93-residue chain is Small ribosomal subunit protein uS19 (93 aa).

Residues 1–23 (MPRSLKKGPFVDDHLQKKVDAEN) are disordered. Residues 9–23 (PFVDDHLQKKVDAEN) show a composition bias toward basic and acidic residues.

Belongs to the universal ribosomal protein uS19 family.

Its function is as follows. Protein S19 forms a complex with S13 that binds strongly to the 16S ribosomal RNA. In Nocardioides sp. (strain ATCC BAA-499 / JS614), this protein is Small ribosomal subunit protein uS19.